Consider the following 917-residue polypeptide: Hexokinase-1 (917 aa).

M1 carries the N-acetylmethionine modification. Residues 1–10 form a mitochondrial-binding peptide (MBP) region; the sequence is MIAAQLLAYY. 2 Hexokinase domains span residues 16–458 and 464–906; these read DDQV…MVTA and AEQH…LITA. ATP-binding positions include R30 and 84–89; that span reads DLGGSS. The tract at residues 73-207 is hexokinase small subdomain 1; the sequence is DGSEKGDFIA…DYDANIVAVV (135 aa). 84–91 contributes to the D-glucose 6-phosphate binding site; sequence DLGGSSFR. D-glucose is bound by residues S155, 172–173, and 208–209; these read TK and ND. Positions 208–447 are hexokinase large subdomain 1; it reads NDTVGTMMTC…SDVRFLLSES (240 aa). 2 residues coordinate D-glucose 6-phosphate: D209 and T232. Residues N235, E260, and 291–294 contribute to the D-glucose site; that span reads QLFE. S337 is modified (phosphoserine). Residue N345 participates in ATP binding. 413-415 is a D-glucose 6-phosphate binding site; sequence DGS. 425-426 provides a ligand contact to ATP; sequence RR. D-glucose 6-phosphate is bound by residues S449 and 532-536; that span reads DLGGT. The tract at residues 521–655 is hexokinase small subdomain 2; the sequence is DGTENGDFLA…EFDLDVVAVV (135 aa). An ATP-binding site is contributed by 532 to 537; the sequence is DLGGTN. Residues 603 to 604, 620 to 621, and 656 to 657 contribute to the D-glucose site; these read SF, TK, and ND. The hexokinase large subdomain 2 stretch occupies residues 656–895; it reads NDTVGTMMTC…CNVSFLLSED (240 aa). D657 and T680 together coordinate D-glucose 6-phosphate. Residue T680 coordinates ATP. D-glucose is bound by residues 682–683, E708, and E742; that span reads SN. ATP contacts are provided by residues 747-748, 784-788, and 863-867; these read GM, TKFLS, and TLYKL. D-glucose 6-phosphate contacts are provided by residues 861 to 863 and S897; that span reads DGT.

The protein belongs to the hexokinase family. In terms of assembly, monomer. Interacts with RABL2/RABL2A; binds preferentially to GTP-bound RABL2. Interacts with VDAC1. The HK1-VDAC1 complex interacts with ATF2. Interacts (via N-terminal spermatogenic cell-specific region) with PFKM (via C-terminus). Interacts with SMAD5.

It is found in the mitochondrion outer membrane. Its subcellular location is the cytoplasm. It localises to the cytosol. The enzyme catalyses a D-hexose + ATP = a D-hexose 6-phosphate + ADP + H(+). The catalysed reaction is D-fructose + ATP = D-fructose 6-phosphate + ADP + H(+). It catalyses the reaction D-glucose + ATP = D-glucose 6-phosphate + ADP + H(+). It carries out the reaction D-mannose + ATP = D-mannose 6-phosphate + ADP + H(+). The enzyme catalyses D-glucosamine + ATP = D-glucosamine 6-phosphate + ADP + H(+). The protein operates within carbohydrate metabolism; hexose metabolism. It participates in carbohydrate degradation; glycolysis; D-glyceraldehyde 3-phosphate and glycerone phosphate from D-glucose: step 1/4. Its activity is regulated as follows. Hexokinase is an allosteric enzyme inhibited by its product D-glucose 6-phosphate. Hexokinase activity is inhibited by N-acetyl-D-glucosamine. Catalyzes the phosphorylation of various hexoses, such as D-glucose, D-glucosamine, D-fructose, D-mannose and 2-deoxy-D-glucose, to hexose 6-phosphate (D-glucose 6-phosphate, D-glucosamine 6-phosphate, D-fructose 6-phosphate, D-mannose 6-phosphate and 2-deoxy-D-glucose 6-phosphate, respectively). Does not phosphorylate N-acetyl-D-glucosamine. Mediates the initial step of glycolysis by catalyzing phosphorylation of D-glucose to D-glucose 6-phosphate. Involved in innate immunity and inflammation by acting as a pattern recognition receptor for bacterial peptidoglycan. When released in the cytosol, N-acetyl-D-glucosamine component of bacterial peptidoglycan inhibits the hexokinase activity of HK1 and causes its dissociation from mitochondrial outer membrane, thereby activating the NLRP3 inflammasome. In Pongo abelii (Sumatran orangutan), this protein is Hexokinase-1.